Consider the following 342-residue polypeptide: Probable tyrosine--tRNA ligase, cytoplasmic (342 aa).

Tyr48 is an L-tyrosine binding site. A 'HIGH' region motif is present at residues 53-61 (ITGKPHIGY). L-tyrosine contacts are provided by Tyr175, Gln179, Asp182, and Gln197. The 'KMSKS' region motif lies at 231–235 (KMSSS).

The protein belongs to the class-I aminoacyl-tRNA synthetase family. Homodimer.

It is found in the cytoplasm. It catalyses the reaction tRNA(Tyr) + L-tyrosine + ATP = L-tyrosyl-tRNA(Tyr) + AMP + diphosphate + H(+). The protein is Probable tyrosine--tRNA ligase, cytoplasmic of Enterocytozoon bieneusi (strain H348) (Microsporidian parasite).